Consider the following 499-residue polypeptide: Serine/threonine-protein phosphatase 5 (499 aa).

A disordered region spans residues 1-24 (MAMAEGERTECAETPRDEPPADGT). An N-acetylalanine modification is found at Ala2. TPR repeat units lie at residues 28 to 61 (AEELKTQANDYFKAKDYENAIKFYSQAIELNPGN), 62 to 95 (AIYYGNRSLAYLRTECYGYALGDATRAIELDKKY), and 96 to 129 (IKGYYRRAASNMALGKFRAALRDYETVVKVKPND). The segment at 184-499 (GKVTITFMKD…ANTLLQLGMM (316 aa)) is catalytic. Asp242, His244, and Asp271 together coordinate Mn(2+). A substrate-binding site is contributed by His244. Substrate-binding positions include Arg275 and 303–304 (NH). Asn303 provides a ligand contact to Mn(2+). The active-site Proton donor/acceptor is the His304. Mn(2+) is bound at residue His352. Arg400 and His427 together coordinate substrate. Residue His427 coordinates Mn(2+). Residues 495–499 (QLGMM) are required for autoinhibition.

This sequence belongs to the PPP phosphatase family. PP-5 (PP-T) subfamily. As to quaternary structure, probably forms a complex composed of chaperones HSP90 and HSP70, co-chaperones STIP1/HOP, CDC37, PPP5C, PTGES3/p23, TSC1 and client protein TSC2. Probably forms a complex composed of chaperones HSP90 and HSP70, co-chaperones CDC37, PPP5C, TSC1 and client protein TSC2, CDK4, AKT, RAF1 and NR3C1; this complex does not contain co-chaperones STIP1/HOP and PTGES3/p23. Part of a complex with HSP90/HSP90AA1 and steroid receptors. Interacts (via TPR repeats) with HSP90AA1 (via TPR repeat-binding motif) or HSPA1A/HSPA1B; the interaction is direct and activates the phosphatase activity. Dissociates from HSPA1A/HSPA1B and HSP90AA1 in response to arachidonic acid. Interacts with CPNE1 (via VWFA domain). Interacts with CDC16, CDC27. Interacts with KLHDC10 (via the 6 Kelch repeats); inhibits the phosphatase activity on MAP3K5. Interacts with ATM and ATR; both interactions are induced by DNA damage and enhance ATM and ATR kinase activity. Interacts with RAD17; reduced by DNA damage. Interacts with nuclear receptors such as NR3C1/GCR and PPARG (activated by agonist); regulates their transactivation activities. Interacts (via TPR repeats) with S100 proteins S100A1, S100A2, S100A6, S100B and S100P; the interactions are calcium-dependent, strongly activate PPP5C phosphatase activity and compete with HSP90AA1 and MAP3K5 interactions. Interacts with SMAD2 and SMAD3 but not with SMAD1; decreases SMAD3 phosphorylation and protein levels. Interacts (via TPR repeats) with CRY1 and CRY2; the interaction with CRY2 down-regulates the phosphatase activity on CSNK1E. Interacts (via TPR repeats) with the active form of RAC1, GNA12 or GNA13; these interactions activate the phosphatase activity and translocate PPP5C to the cell membrane. Interacts with FLCN. Mg(2+) is required as a cofactor. The cofactor is Mn(2+). In terms of processing, activated by at least two different proteolytic cleavages producing a 56 kDa and a 50 kDa form. Expressed in liver (at protein level) and brain, enriched in suprachiasmatic nuclei.

The protein localises to the nucleus. It is found in the cytoplasm. The protein resides in the cell membrane. It catalyses the reaction O-phospho-L-seryl-[protein] + H2O = L-seryl-[protein] + phosphate. It carries out the reaction O-phospho-L-threonyl-[protein] + H2O = L-threonyl-[protein] + phosphate. With respect to regulation, autoinhibited. In the autoinhibited state, the TPR domain interacts with the catalytic region and prevents substrate access to the catalytic pocket. Allosterically activated by various polyunsaturated fatty acids, free long-chain fatty-acids and long-chain fatty acyl-CoA esters, arachidonic acid being the most effective activator. HSP90A and probably RAC1, GNA12 and GNA13 can also release the autoinhibition by the TPR repeat. Activation by RAC1, GNA12 and GNA13 is synergistic with the one produced by fatty acids binding. Inhibited by okadaic acid. Serine/threonine-protein phosphatase that dephosphorylates a myriad of proteins involved in different signaling pathways including the kinases CSNK1E, ASK1/MAP3K5, PRKDC and RAF1, the nuclear receptors NR3C1, PPARG, ESR1 and ESR2, SMAD proteins and TAU/MAPT. Implicated in wide ranging cellular processes, including apoptosis, differentiation, DNA damage response, cell survival, regulation of ion channels or circadian rhythms, in response to steroid and thyroid hormones, calcium, fatty acids, TGF-beta as well as oxidative and genotoxic stresses. Participates in the control of DNA damage response mechanisms such as checkpoint activation and DNA damage repair through, for instance, the regulation ATM/ATR-signaling and dephosphorylation of PRKDC and TP53BP1. Inhibits ASK1/MAP3K5-mediated apoptosis induced by oxidative stress. Plays a positive role in adipogenesis, mainly through the dephosphorylation and activation of PPARG transactivation function. Also dephosphorylates and inhibits the anti-adipogenic effect of NR3C1. Regulates the circadian rhythms, through the dephosphorylation and activation of CSNK1E. May modulate TGF-beta signaling pathway by the regulation of SMAD3 phosphorylation and protein expression levels. Dephosphorylates and may play a role in the regulation of TAU/MAPT. Through their dephosphorylation, may play a role in the regulation of ions channels such as KCNH2. Dephosphorylate FNIP1, disrupting interaction with HSP90AA1/Hsp90. This is Serine/threonine-protein phosphatase 5 (Ppp5c) from Mus musculus (Mouse).